An 809-amino-acid polypeptide reads, in one-letter code: Putative zinc metalloprotease TRE2 (809 aa).

Polar residues-rich tracts occupy residues 1 to 12 (MRSSYQPVSTTN) and 20 to 30 (PTASSSHNLLM). A disordered region spans residues 1–66 (MRSSYQPVST…PSYEFDIEDP (66 aa)). The Cytoplasmic portion of the chain corresponds to 1 to 125 (MRSSYQPVST…KIGNPFILRR (125 aa)). Residues 37-50 (SPPSSNDNSIETNI) are compositionally biased toward low complexity. The helical; Signal-anchor for type II membrane protein transmembrane segment at 126-146 (FFYIIFMSFIAYYVLSSGYLF) threads the bilayer. At 147-809 (NEKASGSKGM…VEETNDIGYK (663 aa)) the chain is on the extracellular side. N-linked (GlcNAc...) asparagine glycosylation is present at Asn228. The region spanning 255-349 (SNGKLSKVSL…STGDASGLNW (95 aa)) is the PA domain. N-linked (GlcNAc...) asparagine glycosylation is found at Asn669 and Asn736.

This sequence belongs to the peptidase M28 family. M28B subfamily.

The protein resides in the membrane. The protein is Putative zinc metalloprotease TRE2 (TRE2) of Saccharomyces cerevisiae (strain ATCC 204508 / S288c) (Baker's yeast).